Here is a 65-residue protein sequence, read N- to C-terminus: UPF0434 protein CC_0108 (65 aa).

The protein belongs to the UPF0434 family.

This is UPF0434 protein CC_0108 from Caulobacter vibrioides (strain ATCC 19089 / CIP 103742 / CB 15) (Caulobacter crescentus).